The chain runs to 260 residues: MLIIPAIDIKEGKCVRLTRGDFAQKKIYLDNPADMAIIWRKQNAKMLHVVDLDAALTGEMVNFEKIREIVELLDIPIQVGGGIRSVEAVEKYLSIGVSRVVIGSAAVTNPSLVADLLKKYRPSQIVVGIDAEHGVPKIKGWTESSNMQDYELALEMKKLGVERIIYTDITRDGMLQGVGYETTKRFAEKAGMKITASGGVSTSDDLHKLRSLERFGVDSVIIGKALYECNFPCQELWYAYEQDLGIDGEFSTARKKECCR.

Residue aspartate 8 is the Proton acceptor of the active site. The active-site Proton donor is aspartate 130.

It belongs to the HisA/HisF family.

It is found in the cytoplasm. The enzyme catalyses 1-(5-phospho-beta-D-ribosyl)-5-[(5-phospho-beta-D-ribosylamino)methylideneamino]imidazole-4-carboxamide = 5-[(5-phospho-1-deoxy-D-ribulos-1-ylimino)methylamino]-1-(5-phospho-beta-D-ribosyl)imidazole-4-carboxamide. It functions in the pathway amino-acid biosynthesis; L-histidine biosynthesis; L-histidine from 5-phospho-alpha-D-ribose 1-diphosphate: step 4/9. This chain is 1-(5-phosphoribosyl)-5-[(5-phosphoribosylamino)methylideneamino] imidazole-4-carboxamide isomerase, found in Chlorobaculum parvum (strain DSM 263 / NCIMB 8327) (Chlorobium vibrioforme subsp. thiosulfatophilum).